Here is a 418-residue protein sequence, read N- to C-terminus: L-rhamnose isomerase (418 aa).

Positions 262, 294, and 296 each coordinate Mn(2+).

Belongs to the rhamnose isomerase family. As to quaternary structure, homotetramer. It depends on Mn(2+) as a cofactor.

It localises to the cytoplasm. It catalyses the reaction L-rhamnopyranose = L-rhamnulose. It functions in the pathway carbohydrate degradation; L-rhamnose degradation; glycerone phosphate from L-rhamnose: step 1/3. Catalyzes the interconversion of L-rhamnose and L-rhamnulose. This Cronobacter sakazakii (strain ATCC BAA-894) (Enterobacter sakazakii) protein is L-rhamnose isomerase.